The primary structure comprises 241 residues: Meiotically up-regulated gene 130 protein (241 aa).

Its subcellular location is the mitochondrion. Functionally, has a role in meiosis. The sequence is that of Meiotically up-regulated gene 130 protein (mug130) from Schizosaccharomyces pombe (strain 972 / ATCC 24843) (Fission yeast).